A 196-amino-acid polypeptide reads, in one-letter code: Probable GTP-binding protein EngB (196 aa).

One can recognise an EngB-type G domain in the interval 24–196 (ELSEVALSGR…IWNLIEPYIS (173 aa)). Residues 32–39 (GRSNVGKS), 59–63 (GKTQT), 77–80 (DVPG), 144–147 (TKED), and 176–178 (YSS) each bind GTP. Positions 39 and 61 each coordinate Mg(2+).

It belongs to the TRAFAC class TrmE-Era-EngA-EngB-Septin-like GTPase superfamily. EngB GTPase family. It depends on Mg(2+) as a cofactor.

In terms of biological role, necessary for normal cell division and for the maintenance of normal septation. This is Probable GTP-binding protein EngB from Staphylococcus aureus (strain MW2).